Consider the following 274-residue polypeptide: uncharacterized protein (274 aa).

The signal sequence occupies residues 1-17 (MKKLLAGFLTLSLALAA). Cys-18 is lipidated: N-palmitoyl cysteine. Cys-18 carries S-diacylglycerol cysteine lipidation. Positions 18 to 169 (CSNGSDDDSS…DANNGASSAN (152 aa)) are disordered. Basic and acidic residues predominate over residues 25-76 (DSSKKDDSSKDNQSSDDKSKDSKNDDKKNNDSDKDKDNNSDSDKNSDSKSDD). Over residues 91–169 (SDNASGSDSS…DANNGASSAN (79 aa)) the composition is skewed to low complexity.

Its subcellular location is the cell membrane. This is an uncharacterized protein from Staphylococcus saprophyticus subsp. saprophyticus (strain ATCC 15305 / DSM 20229 / NCIMB 8711 / NCTC 7292 / S-41).